Consider the following 71-residue polypeptide: UPF0337 protein RPA4418 (71 aa).

A disordered region spans residues 1–54; the sequence is MGSTMDKIKGQANELAGKAKQGIGEATGSDKLKGEGAIQEAKGHGQQALGNAKD.

Belongs to the UPF0337 (CsbD) family.

The chain is UPF0337 protein RPA4418 from Rhodopseudomonas palustris (strain ATCC BAA-98 / CGA009).